A 432-amino-acid polypeptide reads, in one-letter code: 3-phosphoshikimate 1-carboxyvinyltransferase (432 aa).

3-phosphoshikimate is bound by residues Lys23, Ser24, and Arg28. Lys23 provides a ligand contact to phosphoenolpyruvate. Positions 99 and 127 each coordinate phosphoenolpyruvate. 3-phosphoshikimate contacts are provided by Ser172, Ser173, Gln174, Ser200, Asp317, Asn341, and Lys345. Gln174 lines the phosphoenolpyruvate pocket. Catalysis depends on Asp317, which acts as the Proton acceptor. Arg349, Arg391, and Lys416 together coordinate phosphoenolpyruvate.

The protein belongs to the EPSP synthase family. Monomer.

It localises to the cytoplasm. The catalysed reaction is 3-phosphoshikimate + phosphoenolpyruvate = 5-O-(1-carboxyvinyl)-3-phosphoshikimate + phosphate. The protein operates within metabolic intermediate biosynthesis; chorismate biosynthesis; chorismate from D-erythrose 4-phosphate and phosphoenolpyruvate: step 6/7. Its function is as follows. Catalyzes the transfer of the enolpyruvyl moiety of phosphoenolpyruvate (PEP) to the 5-hydroxyl of shikimate-3-phosphate (S3P) to produce enolpyruvyl shikimate-3-phosphate and inorganic phosphate. The chain is 3-phosphoshikimate 1-carboxyvinyltransferase from Blochmanniella pennsylvanica (strain BPEN).